The primary structure comprises 211 residues: Potassium-transporting ATPase KdpC subunit (211 aa).

A helical transmembrane segment spans residues 13–35 (VVTMVLTGLLYPLAVTGLAQLLF).

It belongs to the KdpC family. The system is composed of three essential subunits: KdpA, KdpB and KdpC.

It localises to the cell membrane. Part of the high-affinity ATP-driven potassium transport (or Kdp) system, which catalyzes the hydrolysis of ATP coupled with the electrogenic transport of potassium into the cytoplasm. This subunit acts as a catalytic chaperone that increases the ATP-binding affinity of the ATP-hydrolyzing subunit KdpB by the formation of a transient KdpB/KdpC/ATP ternary complex. The polypeptide is Potassium-transporting ATPase KdpC subunit (Myxococcus xanthus).